The following is a 421-amino-acid chain: MVRILPIILSALSSKLVASTILHSSIHSVPSGGEIISAEDLKELEISGNSICVDNRCYPKIFEPRHDWQPILPGQELPGGLDIRINMDTGLKEAKLNDEKNVGDNGSHELIVSSEDMKASPGDYEFSSDFKEMRNIIDSNPTLSSQDIARLEDSFDRIMEFAHDYKHGYKIITHEFALLANLSLNENLPLTLRELSTRVITSCLRNNPPVVEFINESFPNFKSKIMAALSNLNDSNHRSSNILIKRYLSILNELPVTSEDLPIYSTVVLQNVYERNNKDKQLQIKVLELISKILKADMYENDDTNLILFKRNAENWSSNLQEWANEFQEMVQNKSIDELHTRTFFDTLYNLKKIFKSDITINKGFLNWLAQQCKARQSNLDNGLQERDTEQDSFDKKLIDSRHLIFGNPMAHRIKNFRDEL.

Positions 1–19 (MVRILPIILSALSSKLVAS) are cleaved as a signal peptide. 6 N-linked (GlcNAc...) asparagine glycosylation sites follow: N105, N181, N215, N233, N315, and N333. Residues 418–421 (RDEL) carry the Prevents secretion from ER motif.

This sequence belongs to the SIL1 family. In terms of assembly, interacts with KAR2. Post-translationally, N-glycosylated.

The protein localises to the endoplasmic reticulum lumen. Its function is as follows. Required for protein translocation and folding in the endoplasmic reticulum (ER). Functions as a nucleotide exchange factor for the ER lumenal chaperone KAR2. In Saccharomyces cerevisiae (strain ATCC 204508 / S288c) (Baker's yeast), this protein is Nucleotide exchange factor SIL1 (SIL1).